We begin with the raw amino-acid sequence, 188 residues long: ATP synthase subunit b 2 (188 aa).

Positions 1-23 (MAEGHGDANGATAHTAADGGHKA) are disordered. Residues 8–18 (ANGATAHTAAD) are compositionally biased toward low complexity. The helical transmembrane segment at 37 to 57 (LVSLLIAFVALYLIVSKIALP) threads the bilayer.

It belongs to the ATPase B chain family. F-type ATPases have 2 components, F(1) - the catalytic core - and F(0) - the membrane proton channel. F(1) has five subunits: alpha(3), beta(3), gamma(1), delta(1), epsilon(1). F(0) has three main subunits: a(1), b(2) and c(10-14). The alpha and beta chains form an alternating ring which encloses part of the gamma chain. F(1) is attached to F(0) by a central stalk formed by the gamma and epsilon chains, while a peripheral stalk is formed by the delta and b chains.

Its subcellular location is the cell inner membrane. Its function is as follows. F(1)F(0) ATP synthase produces ATP from ADP in the presence of a proton or sodium gradient. F-type ATPases consist of two structural domains, F(1) containing the extramembraneous catalytic core and F(0) containing the membrane proton channel, linked together by a central stalk and a peripheral stalk. During catalysis, ATP synthesis in the catalytic domain of F(1) is coupled via a rotary mechanism of the central stalk subunits to proton translocation. Component of the F(0) channel, it forms part of the peripheral stalk, linking F(1) to F(0). The b'-subunit is a diverged and duplicated form of b found in plants and photosynthetic bacteria. The sequence is that of ATP synthase subunit b 2 (atpF2) from Rhodopseudomonas palustris (strain BisB18).